The sequence spans 119 residues: Holo-[acyl-carrier-protein] synthase (119 aa).

Mg(2+) contacts are provided by Asp-5 and Glu-51.

The protein belongs to the P-Pant transferase superfamily. AcpS family. Mg(2+) is required as a cofactor.

It localises to the cytoplasm. The catalysed reaction is apo-[ACP] + CoA = holo-[ACP] + adenosine 3',5'-bisphosphate + H(+). Its function is as follows. Transfers the 4'-phosphopantetheine moiety from coenzyme A to a Ser of acyl-carrier-protein. In Helicobacter pylori (strain G27), this protein is Holo-[acyl-carrier-protein] synthase.